We begin with the raw amino-acid sequence, 643 residues long: Thread biopolymer filament subunit alpha (643 aa).

Residues 1 to 13 (MSISQTVSKSYTK) show a composition bias toward polar residues. The interval 1–34 (MSISQTVSKSYTKSVSRGGQGVSYSQSSSHKVGG) is disordered. The segment at 1–191 (MSISQTVSKS…PDTVQHTRIR (191 aa)) is head. A compositionally biased stretch (low complexity) spans 14 to 31 (SVSRGGQGVSYSQSSSHK). Residues 192 to 510 (EKQDLQTLNT…KLLDSEETRI (319 aa)) form the IF rod domain. The interval 193–227 (KQDLQTLNTKFANLVDQVRTLEQHNAILKAQISMI) is coil 1A. The segment at 228-240 (TSPSDTPEGPVNT) is linker 1. Residues 241–341 (AVVASTVTAT…YNARVREVQA (101 aa)) are coil 1B. The interval 342–362 (AVTGGPTAAYSIRVDNTHQAI) is linker 12. The tract at residues 363-381 (DLTTSLQEMKTHYEVLATK) is coil 2A. The tract at residues 382-389 (SREEAFTQ) is linker 2. The segment at 390–510 (VQPRIQEMAV…KLLDSEETRI (121 aa)) is coil 2B. Residues 511–643 (SHGGGITITT…SSARSSSRIY (133 aa)) form a tail region. The disordered stretch occupies residues 622–643 (SRAGYSASRKSYSSARSSSRIY).

The protein belongs to the intermediate filament family. In terms of assembly, coiled-coil heterodimer of an alpha and a gamma subunit. Assemble into 10 nm filaments. Forms a massive, conical, intermediate filament biopolymer of approximately 60 cm.

The protein localises to the secreted. It is found in the extracellular space. Its function is as follows. Released extracellularly into seawater and provides physical and biological defense against invasive organism by modulation of the viscoelastic properties of mucus. This chain is Thread biopolymer filament subunit alpha, found in Eptatretus stoutii (Pacific hagfish).